Reading from the N-terminus, the 714-residue chain is Ribonucleoside-diphosphate reductase 2 subunit alpha (714 aa).

Substrate-binding positions include Thr-161, 177-178 (SC), Gly-206, 386-390 (NLCSE), and 588-592 (PTGSI). The cysteines at positions 178 and 415 are disulfide-linked. Asn-386 (proton acceptor) is an active-site residue. The Cysteine radical intermediate role is filled by Cys-388. The Proton acceptor role is filled by Glu-390.

The protein belongs to the ribonucleoside diphosphate reductase large chain family. In terms of assembly, tetramer of two alpha and two beta subunits.

The enzyme catalyses a 2'-deoxyribonucleoside 5'-diphosphate + [thioredoxin]-disulfide + H2O = a ribonucleoside 5'-diphosphate + [thioredoxin]-dithiol. Its activity is regulated as follows. Under complex allosteric control mediated by deoxynucleoside triphosphates and ATP binding. The type of nucleotide bound at the specificity site determines substrate preference. It seems probable that ATP makes the enzyme reduce CDP and UDP, dGTP favors ADP reduction and dTTP favors GDP reduction. In terms of biological role, provides the precursors necessary for DNA synthesis. Catalyzes the biosynthesis of deoxyribonucleotides from the corresponding ribonucleotides. R1E contains the binding sites for both substrates and allosteric effectors and carries out the actual reduction of the ribonucleotide. In Escherichia coli (strain K12), this protein is Ribonucleoside-diphosphate reductase 2 subunit alpha (nrdE).